The following is a 97-amino-acid chain: Protein RnfH (97 aa).

It belongs to the UPF0125 (RnfH) family.

This is Protein RnfH from Paramagnetospirillum magneticum (strain ATCC 700264 / AMB-1) (Magnetospirillum magneticum).